The following is a 164-amino-acid chain: Cell division protein SepF (164 aa).

The interval 29–57 (INKGRGASQQEYDEYYEDSTPTVTQKEDP) is disordered.

The protein belongs to the SepF family. As to quaternary structure, homodimer. Interacts with FtsZ.

It is found in the cytoplasm. Functionally, cell division protein that is part of the divisome complex and is recruited early to the Z-ring. Probably stimulates Z-ring formation, perhaps through the cross-linking of FtsZ protofilaments. Its function overlaps with FtsA. In Exiguobacterium sibiricum (strain DSM 17290 / CCUG 55495 / CIP 109462 / JCM 13490 / 255-15), this protein is Cell division protein SepF.